The following is a 339-amino-acid chain: Uroporphyrinogen decarboxylase (339 aa).

Substrate-binding positions include 23–27, Asp72, Tyr147, Thr202, and His315; that span reads RQAGR.

This sequence belongs to the uroporphyrinogen decarboxylase family. In terms of assembly, homodimer.

Its subcellular location is the cytoplasm. It carries out the reaction uroporphyrinogen III + 4 H(+) = coproporphyrinogen III + 4 CO2. It participates in porphyrin-containing compound metabolism; protoporphyrin-IX biosynthesis; coproporphyrinogen-III from 5-aminolevulinate: step 4/4. In terms of biological role, catalyzes the decarboxylation of four acetate groups of uroporphyrinogen-III to yield coproporphyrinogen-III. This Geotalea daltonii (strain DSM 22248 / JCM 15807 / FRC-32) (Geobacter daltonii) protein is Uroporphyrinogen decarboxylase.